The chain runs to 740 residues: Zinc finger CCCH domain-containing protein 14 (740 aa).

4 disordered regions span residues S82–G240, V254–V314, I390–E426, and S444–T469. Basic and acidic residues-rich tracts occupy residues E87–R158 and E176–H185. The segment covering D186–E200 has biased composition (basic residues). Over residues I204–A214 the composition is skewed to polar residues. Polar residues predominate over residues S393–N409. Acidic residues predominate over residues I414–E426. 2 consecutive C3H1-type zinc fingers follow at residues H499–T522 and T523–P543. The interval I623–P661 is disordered. The segment covering E632–A652 has biased composition (basic and acidic residues). 3 C3H1-type zinc fingers span residues L668–K691, C674–K691, and C693–K709.

This sequence belongs to the ZC3H14 family.

It is found in the nucleus. It localises to the cytoplasm. Its function is as follows. RNA-binding protein involved in the biogenesis of circular RNAs (circRNAs), which are produced by back-splicing circularization of pre-mRNAs. The sequence is that of Zinc finger CCCH domain-containing protein 14 (sut-2) from Caenorhabditis elegans.